We begin with the raw amino-acid sequence, 457 residues long: Argininosuccinate lyase (457 aa).

Belongs to the lyase 1 family. Argininosuccinate lyase subfamily.

Its subcellular location is the cytoplasm. The catalysed reaction is 2-(N(omega)-L-arginino)succinate = fumarate + L-arginine. Its pathway is amino-acid biosynthesis; L-arginine biosynthesis; L-arginine from L-ornithine and carbamoyl phosphate: step 3/3. The polypeptide is Argininosuccinate lyase (Escherichia fergusonii (strain ATCC 35469 / DSM 13698 / CCUG 18766 / IAM 14443 / JCM 21226 / LMG 7866 / NBRC 102419 / NCTC 12128 / CDC 0568-73)).